A 261-amino-acid polypeptide reads, in one-letter code: Indole-3-glycerol phosphate synthase (261 aa).

This sequence belongs to the TrpC family.

It catalyses the reaction 1-(2-carboxyphenylamino)-1-deoxy-D-ribulose 5-phosphate + H(+) = (1S,2R)-1-C-(indol-3-yl)glycerol 3-phosphate + CO2 + H2O. The protein operates within amino-acid biosynthesis; L-tryptophan biosynthesis; L-tryptophan from chorismate: step 4/5. This is Indole-3-glycerol phosphate synthase from Campylobacter concisus (strain 13826).